A 1160-amino-acid chain; its full sequence is Transcription factor tau 138 kDa subunit (1160 aa).

The interval 475-533 is disordered; sequence PNSKKTPNKNKRKRQVKNSTNASVAGNISNPKRIKLEQHVSTAQEPKSAEDSPSSNGGT. Residues 480–490 are compositionally biased toward basic residues; sequence TPNKNKRKRQV. Polar residues-rich tracts occupy residues 491 to 504 and 513 to 529; these read KNSTNASVAGNISN and HVSTAQEPKSAEDSPSS. Serine 546 carries the phosphoserine modification.

In terms of assembly, component of the TFIIIC complex composed of TFC1, TFC3, TFC4, TFC6, TFC7 and TFC8. The subunits are organized in two globular domains, tauA and tauB, connected by a proteolysis-sensitive and flexible linker. Interacts with TFC1, TFC4 and TFC6.

The protein resides in the nucleus. It is found in the mitochondrion. In terms of biological role, TFIIIC mediates tRNA and 5S RNA gene activation by binding to intragenic promoter elements. Upstream of the transcription start site, TFIIIC assembles the initiation complex TFIIIB-TFIIIC-tDNA, which is sufficient for RNA polymerase III recruitment and function. Part of the tauB domain of TFIIIC that binds boxB DNA promoter sites of tRNA and similar genes. TFC3 is essential for cell viability. Cooperates with TFC6 in DNA binding. The chain is Transcription factor tau 138 kDa subunit (TFC3) from Saccharomyces cerevisiae (strain ATCC 204508 / S288c) (Baker's yeast).